The chain runs to 395 residues: Major outer membrane protein P.IA (395 aa).

Residues 1–19 form the signal peptide; sequence MRKKLTALVLSALPLAAVA.

This sequence belongs to the Gram-negative porin family. As to quaternary structure, homotrimer.

The protein resides in the cell outer membrane. Serves as a slightly cation selective porin. Major antigen on the gonococcal cell surface and it may have pathogenic properties in addition to its porin activity. This is Major outer membrane protein P.IA (porA) from Neisseria meningitidis serogroup A / serotype 4A (strain DSM 15465 / Z2491).